Reading from the N-terminus, the 92-residue chain is Small ribosomal subunit protein uS19 (92 aa).

The protein belongs to the universal ribosomal protein uS19 family.

Protein S19 forms a complex with S13 that binds strongly to the 16S ribosomal RNA. The protein is Small ribosomal subunit protein uS19 of Novosphingobium aromaticivorans (strain ATCC 700278 / DSM 12444 / CCUG 56034 / CIP 105152 / NBRC 16084 / F199).